The chain runs to 489 residues: Cytochrome P450 2C70 (489 aa).

The N-terminal stretch at 1–27 (MALFIFLGIWLSCFLFLFLWNQHRGRG) is a signal peptide. Cysteine 434 is a binding site for heme.

This sequence belongs to the cytochrome P450 family. Heme is required as a cofactor. In terms of tissue distribution, expressed in liver.

It localises to the endoplasmic reticulum membrane. Its subcellular location is the microsome membrane. It carries out the reaction chenodeoxycholate + reduced [NADPH--hemoprotein reductase] + O2 = alpha-muricholate + oxidized [NADPH--hemoprotein reductase] + H2O + H(+). The catalysed reaction is ursodeoxycholate + reduced [NADPH--hemoprotein reductase] + O2 = beta-muricholate + oxidized [NADPH--hemoprotein reductase] + H2O + H(+). Its function is as follows. A cytochrome P450 monooxygenase involved in muricholic acid (MCA) synthesis. Hydroxylates at the 6-beta position two major bile acids, chenodeoxycholic acid (CDCA) and ursodeoxycholic acid (UDCA) to form alpha-MCA and beta-MCA, respectively. May regulate NR1H4/farnesoid X receptor signaling, as taurine-conjugated MCAs are antagonists of NR1H4. Mechanistically, uses molecular oxygen inserting one oxygen atom into a substrate, and reducing the second into a water molecule, with two electrons provided by NADPH via cytochrome P450 reductase (CPR; NADPH-ferrihemoprotein reductase). The chain is Cytochrome P450 2C70 from Mus musculus (Mouse).